Here is a 280-residue protein sequence, read N- to C-terminus: tRNA (guanine-N(1)-)-methyltransferase (280 aa).

Residues 71-94 (DDVSSGTASTQDLQSALPHLSKPR) are disordered. Over residues 74–84 (SSGTASTQDLQ) the composition is skewed to polar residues. S-adenosyl-L-methionine is bound by residues Gly146 and 170 to 175 (IGDYVL).

This sequence belongs to the RNA methyltransferase TrmD family. As to quaternary structure, homodimer.

The protein resides in the cytoplasm. The enzyme catalyses guanosine(37) in tRNA + S-adenosyl-L-methionine = N(1)-methylguanosine(37) in tRNA + S-adenosyl-L-homocysteine + H(+). Its function is as follows. Specifically methylates guanosine-37 in various tRNAs. The polypeptide is tRNA (guanine-N(1)-)-methyltransferase (Corynebacterium aurimucosum (strain ATCC 700975 / DSM 44827 / CIP 107346 / CN-1) (Corynebacterium nigricans)).